Consider the following 182-residue polypeptide: Adenine phosphoribosyltransferase (182 aa).

It belongs to the purine/pyrimidine phosphoribosyltransferase family. Homodimer.

The protein resides in the cytoplasm. The catalysed reaction is AMP + diphosphate = 5-phospho-alpha-D-ribose 1-diphosphate + adenine. It participates in purine metabolism; AMP biosynthesis via salvage pathway; AMP from adenine: step 1/1. Functionally, catalyzes a salvage reaction resulting in the formation of AMP, that is energically less costly than de novo synthesis. The sequence is that of Adenine phosphoribosyltransferase from Pseudomonas syringae pv. syringae (strain B728a).